The following is a 235-amino-acid chain: Pyridoxine 5'-phosphate synthase (235 aa).

Asparagine 6 lines the 3-amino-2-oxopropyl phosphate pocket. 8-9 (DH) contributes to the 1-deoxy-D-xylulose 5-phosphate binding site. 3-amino-2-oxopropyl phosphate is bound at residue arginine 17. The active-site Proton acceptor is histidine 42. Positions 44 and 49 each coordinate 1-deoxy-D-xylulose 5-phosphate. The Proton acceptor role is filled by glutamate 69. Residue threonine 99 participates in 1-deoxy-D-xylulose 5-phosphate binding. Catalysis depends on histidine 189, which acts as the Proton donor. 3-amino-2-oxopropyl phosphate-binding positions include glycine 190 and 211-212 (GH).

It belongs to the PNP synthase family. In terms of assembly, homooctamer; tetramer of dimers.

It localises to the cytoplasm. It carries out the reaction 3-amino-2-oxopropyl phosphate + 1-deoxy-D-xylulose 5-phosphate = pyridoxine 5'-phosphate + phosphate + 2 H2O + H(+). Its pathway is cofactor biosynthesis; pyridoxine 5'-phosphate biosynthesis; pyridoxine 5'-phosphate from D-erythrose 4-phosphate: step 5/5. Catalyzes the complicated ring closure reaction between the two acyclic compounds 1-deoxy-D-xylulose-5-phosphate (DXP) and 3-amino-2-oxopropyl phosphate (1-amino-acetone-3-phosphate or AAP) to form pyridoxine 5'-phosphate (PNP) and inorganic phosphate. The protein is Pyridoxine 5'-phosphate synthase of Chlorobium chlorochromatii (strain CaD3).